The primary structure comprises 466 residues: Probable sensor protein PcoS (466 aa).

The Cytoplasmic segment spans residues Met1–Arg10. The helical transmembrane segment at Leu11–Ile31 threads the bilayer. Topologically, residues Ser32 to Thr171 are periplasmic. Residues Trp172–Thr192 form a helical membrane-spanning segment. An HAMP domain is found at Arg193–Arg246. Residues Arg193 to Asp466 are Cytoplasmic-facing. Residues Asp254–Asp466 form the Histidine kinase domain. His257 is subject to Phosphohistidine; by autocatalysis.

Its subcellular location is the cell inner membrane. It carries out the reaction ATP + protein L-histidine = ADP + protein N-phospho-L-histidine.. Its function is as follows. Probable member of a two-component regulatory system PcoS/PcoR. May activate PcoR by phosphorylation. The chain is Probable sensor protein PcoS (pcoS) from Escherichia coli.